Consider the following 427-residue polypeptide: Retron Mx65 reverse transcriptase (427 aa).

The Reverse transcriptase domain maps to Arg136–Val366. Mg(2+) contacts are provided by Asp219, Asp315, and Asp316.

Belongs to the bacterial reverse transcriptase family.

The enzyme catalyses DNA(n) + a 2'-deoxyribonucleoside 5'-triphosphate = DNA(n+1) + diphosphate. In terms of biological role, reverse transcriptase (RT) responsible for synthesis of msDNA-Mx65 (a branched molecule with RNA linked by a 2',5'-phosphodiester bond to ssDNA). The retron transcript serves as primer (from a conserved internal G residue) and template for the reaction, and codes for the RT. The retron is involved in antiviral defense. In Myxococcus xanthus, this protein is Retron Mx65 reverse transcriptase.